Here is a 399-residue protein sequence, read N- to C-terminus: Carbamoyl phosphate synthase small chain (399 aa).

The segment at 1–204 is CPSase; sequence MTKTTLSSDP…WNKGYTINNE (204 aa). L-glutamine contacts are provided by S60, G256, and G258. One can recognise a Glutamine amidotransferase type-1 domain in the interval 208–396; the sequence is HIVAIDYGIK…HDLIVNYREQ (189 aa). C285 acts as the Nucleophile in catalysis. Residues L286, Q289, N327, G329, and F330 each coordinate L-glutamine. Residues H369 and E371 contribute to the active site.

It belongs to the CarA family. In terms of assembly, composed of two chains; the small (or glutamine) chain promotes the hydrolysis of glutamine to ammonia, which is used by the large (or ammonia) chain to synthesize carbamoyl phosphate. Tetramer of heterodimers (alpha,beta)4.

The catalysed reaction is hydrogencarbonate + L-glutamine + 2 ATP + H2O = carbamoyl phosphate + L-glutamate + 2 ADP + phosphate + 2 H(+). The enzyme catalyses L-glutamine + H2O = L-glutamate + NH4(+). Its pathway is amino-acid biosynthesis; L-arginine biosynthesis; carbamoyl phosphate from bicarbonate: step 1/1. It functions in the pathway pyrimidine metabolism; UMP biosynthesis via de novo pathway; (S)-dihydroorotate from bicarbonate: step 1/3. Functionally, small subunit of the glutamine-dependent carbamoyl phosphate synthetase (CPSase). CPSase catalyzes the formation of carbamoyl phosphate from the ammonia moiety of glutamine, carbonate, and phosphate donated by ATP, constituting the first step of 2 biosynthetic pathways, one leading to arginine and/or urea and the other to pyrimidine nucleotides. The small subunit (glutamine amidotransferase) binds and cleaves glutamine to supply the large subunit with the substrate ammonia. In Bartonella bacilliformis (strain ATCC 35685 / KC583 / Herrer 020/F12,63), this protein is Carbamoyl phosphate synthase small chain.